The following is a 257-amino-acid chain: Phosphonates import ATP-binding protein PhnC 1 (257 aa).

An ABC transporter domain is found at 2-246 (IELKNVSKVY…VFKDIYGRPL (245 aa)). 35-42 (GLSGAGKS) contacts ATP.

It belongs to the ABC transporter superfamily. Phosphonates importer (TC 3.A.1.9.1) family. As to quaternary structure, the complex is composed of two ATP-binding proteins (PhnC), two transmembrane proteins (PhnE) and a solute-binding protein (PhnD).

Its subcellular location is the cell membrane. It catalyses the reaction phosphonate(out) + ATP + H2O = phosphonate(in) + ADP + phosphate + H(+). In terms of biological role, part of the ABC transporter complex PhnCDE involved in phosphonates import. Responsible for energy coupling to the transport system. The sequence is that of Phosphonates import ATP-binding protein PhnC 1 from Halalkalibacterium halodurans (strain ATCC BAA-125 / DSM 18197 / FERM 7344 / JCM 9153 / C-125) (Bacillus halodurans).